The primary structure comprises 153 residues: Probable succinate transporter subunit YjjB (153 aa).

The next 4 helical transmembrane spans lie at 7–27, 51–71, 83–103, and 125–145; these read WALLQDMVLAAIPALGFAMVF, MIHFGMNIELASLVASIMIGI, VFTVAAVIPMFPGISAYTAMI, and FLKASFIVGALSIGLSLPGLW.

Belongs to the ThrE exporter (TC 2.A.79) family. The transporter is composed of YjjB and YjjP.

The protein resides in the cell inner membrane. In terms of biological role, involved in succinate export with YjjP. Both proteins are required for export. The sequence is that of Probable succinate transporter subunit YjjB from Yersinia pestis bv. Antiqua (strain Antiqua).